We begin with the raw amino-acid sequence, 177 residues long: Transcription antitermination protein NusB (177 aa).

Positions 1–35 are disordered; it reads MTDSANPTPSARPPRQPRTGTTGTGARKAGSKSGR. Low complexity predominate over residues 17–28; sequence PRTGTTGTGARK.

It belongs to the NusB family.

In terms of biological role, involved in transcription antitermination. Required for transcription of ribosomal RNA (rRNA) genes. Binds specifically to the boxA antiterminator sequence of the ribosomal RNA (rrn) operons. In Acidovorax ebreus (strain TPSY) (Diaphorobacter sp. (strain TPSY)), this protein is Transcription antitermination protein NusB.